Consider the following 2016-residue polypeptide: Sodium channel protein type 5 subunit alpha (2016 aa).

The Cytoplasmic segment spans residues 1-129 (MANFLLPRGT…IRRAAVKILV (129 aa)). The segment at 28 to 56 (MAEKQARGSTTLQESREGLPEEEAPRPQL) is disordered. Serine 36 carries the post-translational modification Phosphoserine. Threonine 38 bears the Phosphothreonine mark. Basic and acidic residues predominate over residues 41 to 52 (ESREGLPEEEAP). One copy of the I repeat lies at 113 to 420 (VLSPFHPIRR…VVAMAYEEQN (308 aa)). The chain crosses the membrane as a helical span at residues 130 to 149 (HSLFNMLIMCTILTNCVFMA). Over 150 to 157 (QHDPPPWT) the chain is Extracellular. The helical transmembrane segment at 158–179 (KYVEYTFTAIYTFESLVKILAR) threads the bilayer. Topologically, residues 180-188 (GFCLHAFTF) are cytoplasmic. A helical transmembrane segment spans residues 189–209 (LRDPWNWLDFSVIIMAYTTEF). The Extracellular segment spans residues 210 to 216 (VDLGNVS). N-linked (GlcNAc...) asparagine glycosylation occurs at asparagine 214. Residues 217 to 236 (ALRTFRVLRALKTISVISGL) traverse the membrane as a helical segment. Over 237-249 (KTIVGALIQSVKK) the chain is Cytoplasmic. The helical transmembrane segment at 250–272 (LADVMVLTVFCLSVFALIGLQLF) threads the bilayer. The Extracellular segment spans residues 273 to 357 (MGNLRHKCVR…PDHGYTSFDS (85 aa)). A disulfide bridge links cysteine 280 with cysteine 335. Asparagine 283, asparagine 288, asparagine 291, asparagine 318, and asparagine 328 each carry an N-linked (GlcNAc...) asparagine glycan. The pore-forming intramembrane region spans 358–378 (FAWAFLALFRLMTQDCWERLY). Over 379–386 (QQTLRSAG) the chain is Extracellular. Residues 387–413 (KIYMIFFMLVIFLGSFYLVNLILAVVA) form a helical membrane-spanning segment. Over 414-719 (MAYEEQNQAT…VKLVVMDPFT (306 aa)) the chain is Cytoplasmic. Serine 457, serine 460, serine 483, and serine 484 each carry phosphoserine. A disordered region spans residues 461 to 591 (LEMSPLAPVN…APGHALHGKK (131 aa)). Threonine 486 carries the post-translational modification Phosphothreonine. Positions 491 to 503 (EDRLPKSDSEDGP) are enriched in basic and acidic residues. Residues serine 497 and serine 510 each carry the phosphoserine modification. A compositionally biased stretch (polar residues) spans 509-528 (LSLTRGLSRTSMKPRSSRGS). Dimethylated arginine; alternate is present on residues arginine 513 and arginine 526. Omega-N-methylarginine; alternate occurs at positions 513 and 526. Phosphoserine occurs at positions 539, 571, 664, and 667. A compositionally biased stretch (polar residues) spans 570–580 (TSAQGQPSPGT). Arginine 680 bears the Dimethylated arginine; alternate mark. Arginine 680 bears the Omega-N-methylarginine; alternate mark. Residues 699-969 (CCPLWMSIKQ…QLALARIQRG (271 aa)) form an II repeat. Residues 720-737 (DLTITMCIVLNTLFMALE) form a helical membrane-spanning segment. The Extracellular segment spans residues 738–746 (HYNMTSEFE). Asparagine 740 is a glycosylation site (N-linked (GlcNAc...) asparagine). A helical membrane pass occupies residues 747–769 (EMLQVGNLVFTGIFTAEMTFKII). Residues 770-775 (ALDPYY) are Cytoplasmic-facing. A helical transmembrane segment spans residues 776 to 796 (YFQQGWNIFDSIIVILSLMEL). Topologically, residues 797–806 (GLSRMSNLSV) are extracellular. N-linked (GlcNAc...) asparagine glycosylation is present at asparagine 803. A helical membrane pass occupies residues 807 to 821 (LRSFRLLRVFKLAKS). Residues 822–838 (WPTLNTLIKIIGNSVGA) are Cytoplasmic-facing. The chain crosses the membrane as a helical span at residues 839–860 (LGNLTLVLAIIVFIFAVVGMQL). Residues 861 to 884 (FGKNYSELRDSDSGLLPRWHMMDF) lie on the Extracellular side of the membrane. A glycan (N-linked (GlcNAc...) asparagine) is linked at asparagine 864. Residues 885 to 903 (FHAFLIIFRILCGEWIETM) constitute an intramembrane region (pore-forming). Residues 904–912 (WDCMEVSGQ) are Extracellular-facing. Cysteine 906 and cysteine 915 are oxidised to a cystine. A helical transmembrane segment spans residues 913-941 (SLCLLVFLLVMVIGNLVVLNLFLALLLSS). Over 942-1203 (FSADNLTAPD…LRKTCYHIVE (262 aa)) the chain is Cytoplasmic. Residues 1005–1141 (IATPYSPPPP…PEDSCSEGST (137 aa)) are disordered. Over residues 1015 to 1030 (ETEKVPPTRKETRFEE) the composition is skewed to basic and acidic residues. Positions 1033 to 1044 (QPGQGTPGDPEP) are enriched in low complexity. Residues 1054–1071 (SDTDDQEEDEENSLGTEE) show a composition bias toward acidic residues. The segment covering 1096-1113 (SQVSATASSEAEASASQA) has biased composition (low complexity). An III repeat occupies 1187–1501 (PGKVWWRLRK…KKYYNAMKKL (315 aa)). Residues 1204–1225 (HSWFETFIIFMILLSSGALAFE) traverse the membrane as a helical segment. At 1226–1236 (DIYLEERKTIK) the chain is on the extracellular side. The helical transmembrane segment at 1237–1259 (VLLEYADKMFTYVFVLEMLLKWV) threads the bilayer. Over 1260–1268 (AYGFKKYFT) the chain is Cytoplasmic. A helical membrane pass occupies residues 1269–1291 (NAWCWLDFLIVDVSLVSLVANTL). Residues 1292–1297 (GFAEMG) lie on the Extracellular side of the membrane. A helical membrane pass occupies residues 1298-1317 (PIKSLRTLRALRPLRALSRF). The Cytoplasmic portion of the chain corresponds to 1318-1330 (EGMRVVVNALVGA). The chain crosses the membrane as a helical span at residues 1331–1355 (IPSIMNVLLVCLIFWLIFSIMGVNL). At 1356–1400 (FAGKFGRCINQTEGDLPLNYTIVNNKSQCESLNLTGELYWTKVKV) the chain is on the extracellular side. Residues asparagine 1365, asparagine 1374, asparagine 1380, and asparagine 1388 are each glycosylated (N-linked (GlcNAc...) asparagine). The pore-forming intramembrane region spans 1401 to 1422 (NFDNVGAGYLALLQVATFKGWM). Over 1423–1445 (DIMYAAVDSRGYEEQPQWEYNLY) the chain is Extracellular. The helical transmembrane segment at 1446–1470 (MYIYFVIFIIFGSFFTLNLFIGVII) threads the bilayer. The Cytoplasmic segment spans residues 1471 to 1528 (DNFNQQKKKLGGQDIFMTEEQKKYYNAMKKLGSKKPQKPIPRPLNKYQGFIFDIVTKQ). The residue at position 1503 (serine 1503) is a Phosphoserine; by PKC. The IV repeat unit spans residues 1510 to 1807 (IPRPLNKYQG…WEKFDPEATQ (298 aa)). A helical membrane pass occupies residues 1529-1547 (AFDVTIMFLICLNMVTMMV). Topologically, residues 1548–1558 (ETDDQSPEKIN) are extracellular. The helical transmembrane segment at 1559–1580 (ILAKINLLFVAIFTGECIVKLA) threads the bilayer. Over 1581 to 1589 (ALRHYYFTN) the chain is Cytoplasmic. The helical transmembrane segment at 1590-1612 (SWNIFDFVVVILSIVGTVLSDII) threads the bilayer. The Extracellular portion of the chain corresponds to 1613-1619 (QKYFFSP). Residues 1620 to 1640 (TLFRVIRLARIGRILRLIRGA) traverse the membrane as a helical segment. Topologically, residues 1641–1650 (KGIRTLLFAL) are cytoplasmic. Residues 1651-1679 (MMSLPALFNIGLLLFLVMFIYSIFGMANF) form a helical membrane-spanning segment. Topologically, residues 1680–1697 (AYVKWEAGIDDMFNFQTF) are extracellular. The segment at residues 1698–1714 (ANSMLCLFQITTSAGWD) is an intramembrane region (pore-forming). The Extracellular portion of the chain corresponds to 1715–1745 (GLLSPILNTGPPYCDPTLPNSNGSRGDCGSP). N-linked (GlcNAc...) asparagine glycosylation is present at asparagine 1736. A helical membrane pass occupies residues 1746-1771 (AVGILFFTTYIIISFLIVVNMYIAII). The Cytoplasmic portion of the chain corresponds to 1772–2016 (LENFSVATEE…SPDRDRESIV (245 aa)). Positions 1839 to 1901 (DLPMVSGDRI…ITTTLRRKHE (63 aa)) are interaction with FGF13. Residues 1901-1930 (EEVSAMVIQRAFRRHLLQRSLKHASFLFRQ) enclose the IQ domain. A compositionally biased stretch (low complexity) spans 1959–1979 (PLGPPSSSSISSTSFPPSYDS). Residues 1959 to 2016 (PLGPPSSSSISSTSFPPSYDSVTRATSDNLQVRGSDYSHSEDLADFPPSPDRDRESIV) form a disordered region. Residues 1974–1977 (PPSY) are interaction with NEDD4, NEDD4L and WWP2. The span at 1981-1990 (TRATSDNLQV) shows a compositional bias: polar residues.

Belongs to the sodium channel (TC 1.A.1.10) family. Nav1.5/SCN5A subfamily. Cannot form the same regulatory interactions with beta subunits as other Navs do. Interacts with the PDZ domain of the syntrophin SNTA1, SNTB1 and SNTB2. Interacts with NEDD4, NEDD4L, WWP2 and GPD1L. Interacts with CALM. Interacts with FGF13; the interaction is direct and FGF13 may regulate SNC5A density at membranes and function. May also interact with FGF12 and FGF14. Interacts with TMEM233. Interacts with the spider Jingzhaotoxin-I (AC P83974, AC B1P1B7, AC B1P1B8). Interacts with ANK3. Interacts with PKP2 (via N-terminus). Interacts with XIRP2; the interaction is required for normal action potential configuration in the heart. Ubiquitinated by NEDD4L; which promotes its endocytosis. Does not seem to be ubiquitinated by NEDD4 or WWP2. In terms of processing, phosphorylation at Ser-1503 by PKC in a highly conserved cytoplasmic loop slows inactivation of the sodium channel and reduces peak sodium currents. Regulated through phosphorylation by CaMK2D. Post-translationally, lacks the cysteine which covalently binds the conotoxin GVIIJ. This cysteine (position 868) is speculated in other sodium channel subunits alpha to be implied in covalent binding with the sodium channel subunit beta-2 or beta-4. N-glycosylated at Asn-318, probably hinders potential interaction with regulatory subunits. Found in jejunal circular smooth muscle cells (at protein level). Expressed in human atrial and ventricular cardiac muscle but not in adult skeletal muscle, brain, myometrium, liver, or spleen. Isoform 4 is expressed in brain.

The protein localises to the cell membrane. Its subcellular location is the cytoplasm. It is found in the perinuclear region. It localises to the sarcolemma. The protein resides in the T-tubule. The protein localises to the cell junction. It catalyses the reaction Na(+)(in) = Na(+)(out). With respect to regulation, channel inactivation is regulated by intracellular calcium levels. It is a tetrodotoxin-resistant voltage-gated Na(+) channel (Nav). Functionally, pore-forming subunit of Nav1.5, a voltage-gated sodium (Nav) channel that directly mediates the depolarizing phase of action potentials in excitable membranes. Navs, also called VGSCs (voltage-gated sodium channels) or VDSCs (voltage-dependent sodium channels), operate by switching between closed and open conformations depending on the voltage difference across the membrane. In the open conformation they allow Na(+) ions to selectively pass through the pore, along their electrochemical gradient. The influx of Na(+) ions provokes membrane depolarization, initiating the propagation of electrical signals throughout cells and tissues. Nav1.5 is the predominant sodium channel expressed in myocardial cells and it is responsible for the initial upstroke of the action potential in cardiac myocytes, thereby initiating the heartbeat. Required for normal electrical conduction including formation of the infranodal ventricular conduction system and normal action potential configuration, as a result of its interaction with XIRP2. The polypeptide is Sodium channel protein type 5 subunit alpha (Homo sapiens (Human)).